A 252-amino-acid polypeptide reads, in one-letter code: Ubiquinone/menaquinone biosynthesis C-methyltransferase UbiE (252 aa).

S-adenosyl-L-methionine-binding positions include Thr-71, Asp-100, 124–125 (DA), and Ser-141.

Belongs to the class I-like SAM-binding methyltransferase superfamily. MenG/UbiE family.

The catalysed reaction is a 2-demethylmenaquinol + S-adenosyl-L-methionine = a menaquinol + S-adenosyl-L-homocysteine + H(+). It catalyses the reaction a 2-methoxy-6-(all-trans-polyprenyl)benzene-1,4-diol + S-adenosyl-L-methionine = a 5-methoxy-2-methyl-3-(all-trans-polyprenyl)benzene-1,4-diol + S-adenosyl-L-homocysteine + H(+). The protein operates within quinol/quinone metabolism; menaquinone biosynthesis; menaquinol from 1,4-dihydroxy-2-naphthoate: step 2/2. It functions in the pathway cofactor biosynthesis; ubiquinone biosynthesis. Functionally, methyltransferase required for the conversion of demethylmenaquinol (DMKH2) to menaquinol (MKH2) and the conversion of 2-polyprenyl-6-methoxy-1,4-benzoquinol (DDMQH2) to 2-polyprenyl-3-methyl-6-methoxy-1,4-benzoquinol (DMQH2). This is Ubiquinone/menaquinone biosynthesis C-methyltransferase UbiE from Caulobacter vibrioides (strain ATCC 19089 / CIP 103742 / CB 15) (Caulobacter crescentus).